The chain runs to 118 residues: NAD(P)H-quinone oxidoreductase subunit M (118 aa).

Belongs to the complex I NdhM subunit family. In terms of assembly, NDH-1 can be composed of about 15 different subunits; different subcomplexes with different compositions have been identified which probably have different functions.

The protein localises to the cellular thylakoid membrane. The enzyme catalyses a plastoquinone + NADH + (n+1) H(+)(in) = a plastoquinol + NAD(+) + n H(+)(out). The catalysed reaction is a plastoquinone + NADPH + (n+1) H(+)(in) = a plastoquinol + NADP(+) + n H(+)(out). In terms of biological role, NDH-1 shuttles electrons from an unknown electron donor, via FMN and iron-sulfur (Fe-S) centers, to quinones in the respiratory and/or the photosynthetic chain. The immediate electron acceptor for the enzyme in this species is believed to be plastoquinone. Couples the redox reaction to proton translocation, and thus conserves the redox energy in a proton gradient. Cyanobacterial NDH-1 also plays a role in inorganic carbon-concentration. This is NAD(P)H-quinone oxidoreductase subunit M from Rippkaea orientalis (strain PCC 8801 / RF-1) (Cyanothece sp. (strain PCC 8801)).